The sequence spans 307 residues: Alpha N-terminal protein methyltransferase 1 (307 aa).

Over residues 38-54 the composition is skewed to low complexity; it reads EPAPAPAAGSNGVAGEQ. The tract at residues 38–60 is disordered; sequence EPAPAPAAGSNGVAGEQEAGGGG. Residues Gly123, Arg128, 145–147, 179–180, and Gln195 contribute to the S-adenosyl-L-methionine site; these read EPV and LQ.

It belongs to the methyltransferase superfamily. NTM1 family.

It carries out the reaction N-terminal L-alanyl-L-prolyl-L-lysyl-[protein] + 3 S-adenosyl-L-methionine = N-terminal N,N,N-trimethyl-L-alanyl-L-prolyl-L-lysyl-[protein] + 3 S-adenosyl-L-homocysteine + 3 H(+). It catalyses the reaction N-terminal L-seryl-L-prolyl-L-lysyl-[protein] + 3 S-adenosyl-L-methionine = N-terminal N,N,N-trimethyl-L-seryl-L-prolyl-L-lysyl-[protein] + 3 S-adenosyl-L-homocysteine + 3 H(+). The catalysed reaction is N-terminal L-prolyl-L-prolyl-L-lysyl-[protein] + 2 S-adenosyl-L-methionine = N-terminal N,N-dimethyl-L-prolyl-L-prolyl-L-lysyl-[protein] + 2 S-adenosyl-L-homocysteine + 2 H(+). Functionally, alpha-N-methyltransferase that methylates the N-terminus of target proteins containing the N-terminal motif [Ala/Pro/Ser]-Pro-Lys when the initiator Met is cleaved. Specifically catalyzes mono-, di- or tri-methylation of exposed alpha-amino group of Ala or Ser residue in the [Ala/Ser]-Pro-Lys motif and mono- or di-methylation of Pro in the Pro-Pro-Lys motif. This Oryza sativa subsp. indica (Rice) protein is Alpha N-terminal protein methyltransferase 1.